A 691-amino-acid polypeptide reads, in one-letter code: Competence protein ComA (691 aa).

6 helical membrane-spanning segments follow: residues 183–203, 220–240, 280–300, 322–342, 347–367, and 396–416; these read HLVS…AWLA, WVLA…GFSV, LAVL…LIWA, VLSL…SPLV, IPWF…VPFA, and VAAA…LLLL.

The protein to B.subtilis ComEC, H.influenzae REC2, and E.coli YcaI.

Its subcellular location is the cell inner membrane. Functionally, essential for natural transformation. Could be a transporter involved in DNA uptake. The chain is Competence protein ComA (comA) from Neisseria gonorrhoeae.